A 169-amino-acid polypeptide reads, in one-letter code: Sorting nexin-24 (169 aa).

Residue methionine 1 is modified to N-acetylmethionine. Residues 1–125 (MEVYIPSFRY…SFDETESEES (125 aa)) enclose the PX domain. The a 1,2-diacyl-sn-glycero-3-phospho-(1D-myo-inositol-3-phosphate) site is built by arginine 38, serine 40, lysine 61, and arginine 74. Serine 113 and serine 116 each carry phosphoserine.

The protein belongs to the sorting nexin family.

It localises to the cytoplasmic vesicle membrane. In terms of biological role, may be involved in several stages of intracellular trafficking. The polypeptide is Sorting nexin-24 (SNX24) (Homo sapiens (Human)).